The following is a 555-amino-acid chain: Perforin-1 (555 aa).

Positions 1-21 (MAARLLLLGILLLLLPLPVPA) are cleaved as a signal peptide. Disulfide bonds link Cys23–Cys76, Cys31–Cys73, and Cys102–Cys176. In terms of domain architecture, MACPF spans 27-375 (ARSECKRSHK…QYLTDRARWR (349 aa)). The beta stranded transmembrane segment at 129 to 149 (WKVGLDVTPKPTSNVHVSVAG) threads the bilayer. N-linked (GlcNAc...) asparagine glycosylation is present at Asn205. Intrachain disulfides connect Cys242/Cys408, Cys377/Cys393, Cys381/Cys395, and Cys397/Cys407. A beta stranded transmembrane segment spans residues 257-279 (CLTVEAQVNIGIHGSISAEAKAC). The EGF-like domain occupies 376–408 (DCSRPCPPGRQKSPRDPCQCVCHGSAVTTQDCC). The 123-residue stretch at 397–519 (CHGSAVTTQD…CNLNHGHLKF (123 aa)) folds into the C2 domain. Gly429, Asp430, Thr433, Ala434, Asp436, Asp484, Asp486, Asp490, Asp491, and Asp492 together coordinate Ca(2+). 2 disulfide bridges follow: Cys497/Cys510 and Cys525/Cys534. N-linked (GlcNAc...) asparagine glycosylation is present at Asn549.

It belongs to the complement C6/C7/C8/C9 family. Monomer, as soluble protein. Homooligomer; homooligomerizes to form a pore-forming ring. The cofactor is Ca(2+). In terms of processing, N-glycosylated.

The protein localises to the cytolytic granule. Its subcellular location is the secreted. It localises to the cell membrane. It is found in the endosome lumen. In terms of biological role, pore-forming protein that plays a key role in granzyme-mediated programmed cell death, and in defense against virus-infected or neoplastic cells. Plays an important role in killing other cells that are recognized as non-self by the immune system, e.g. in transplant rejection or some forms of autoimmune disease. Can insert into the membrane of target cells in its calcium-bound form, oligomerize and form large pores. Promotes cytolysis and apoptosis of target cells by mediating the passage and uptake of cytotoxic granzymes. Facilitates the delivery of cationic cargo protein, while anionic or neural proteins are not delivered efficiently. Perforin pores allow the release of mature caspase-7 (CASP7) into the extracellular milieu. The chain is Perforin-1 (PRF1) from Homo sapiens (Human).